Reading from the N-terminus, the 292-residue chain is Ribosomal protein L11 methyltransferase (292 aa).

Residues threonine 144, glycine 165, aspartate 187, and asparagine 229 each coordinate S-adenosyl-L-methionine.

This sequence belongs to the methyltransferase superfamily. PrmA family.

The protein localises to the cytoplasm. The catalysed reaction is L-lysyl-[protein] + 3 S-adenosyl-L-methionine = N(6),N(6),N(6)-trimethyl-L-lysyl-[protein] + 3 S-adenosyl-L-homocysteine + 3 H(+). Its function is as follows. Methylates ribosomal protein L11. The sequence is that of Ribosomal protein L11 methyltransferase from Pseudomonas savastanoi pv. phaseolicola (strain 1448A / Race 6) (Pseudomonas syringae pv. phaseolicola (strain 1448A / Race 6)).